Consider the following 665-residue polypeptide: ATPase WRNIP1 (665 aa).

The UBZ4-type zinc-finger motif lies at glutamine 17–proline 44. Residues cysteine 20, cysteine 23, histidine 31, histidine 35, and cysteine 39 each contribute to the Zn(2+) site. Positions alanine 48–aspartate 190 are disordered. Residues serine 65 and serine 75 each carry the phosphoserine modification. Polar residues predominate over residues glutamate 76–alanine 89. Lysine 81 participates in a covalent cross-link: Glycyl lysine isopeptide (Lys-Gly) (interchain with G-Cter in ubiquitin). Residue threonine 85 is modified to Phosphothreonine. A phosphoserine mark is found at serine 91 and serine 92. Over residues serine 92–glutamate 104 the composition is skewed to acidic residues. A Phosphothreonine modification is found at threonine 116. Residues arginine 130 to arginine 155 show a composition bias toward low complexity. A Phosphoserine modification is found at serine 139. A Glycyl lysine isopeptide (Lys-Gly) (interchain with G-Cter in ubiquitin) cross-link involves residue lysine 141. Position 153 is a phosphoserine (serine 153). Over residues glutamate 159–aspartate 184 the composition is skewed to acidic residues. Lysine 225 is covalently cross-linked (Glycyl lysine isopeptide (Lys-Gly) (interchain with G-Cter in ubiquitin)). ATP is bound at residue proline 270–threonine 276. Glycyl lysine isopeptide (Lys-Gly) (interchain with G-Cter in ubiquitin) cross-links involve residues lysine 301, lysine 310, lysine 316, lysine 322, and lysine 335. Lysine 482 is covalently cross-linked (Glycyl lysine isopeptide (Lys-Gly) (interchain with G-Cter in SUMO2); alternate). A Glycyl lysine isopeptide (Lys-Gly) (interchain with G-Cter in ubiquitin); alternate cross-link involves residue lysine 482. Phosphotyrosine is present on residues tyrosine 534 and tyrosine 562. Lysine 627 is covalently cross-linked (Glycyl lysine isopeptide (Lys-Gly) (interchain with G-Cter in ubiquitin)). Lysine 633 participates in a covalent cross-link: Glycyl lysine isopeptide (Lys-Gly) (interchain with G-Cter in ubiquitin); alternate. An N6-acetyllysine; alternate modification is found at lysine 633. Residue lysine 636 forms a Glycyl lysine isopeptide (Lys-Gly) (interchain with G-Cter in ubiquitin) linkage.

This sequence belongs to the AAA ATPase family. RarA/MGS1/WRNIP1 subfamily. In terms of assembly, forms homooligomers, possibly octamers. Directly interacts with POLD1, POLD2 and POLD4. Interacts with the N-terminal domain of WRN. Interacts (via UBZ4-type zinc finger) with monoubiquitin and polyubiquitin. Interacts with TRIM14 and PPP6C; these interactions positively regulate the RIGI signaling pathway. In terms of processing, sumoylated with SUMO1 and SUMO2/3. Ubiquitously expressed.

Its subcellular location is the nucleus. It localises to the cytoplasm. The catalysed reaction is ATP + H2O = ADP + phosphate + H(+). Functionally, functions as a modulator of initiation or reinitiation events during DNA polymerase delta-mediated DNA synthesis. In the presence of ATP, stimulation of DNA polymerase delta-mediated DNA synthesis is decreased. Also plays a role in the innate immune defense against viruses. Stabilizes the RIGI dsRNA interaction and promotes RIGI 'Lys-63'-linked polyubiquitination. In turn, RIGI transmits the signal through mitochondrial MAVS. This is ATPase WRNIP1 from Homo sapiens (Human).